Consider the following 305-residue polypeptide: Nucleotide-binding protein Saro_2904 (305 aa).

15–22 (GLLGAGKT) is an ATP binding site. 68–71 (DTRT) provides a ligand contact to GTP.

This sequence belongs to the RapZ-like family.

Functionally, displays ATPase and GTPase activities. The sequence is that of Nucleotide-binding protein Saro_2904 from Novosphingobium aromaticivorans (strain ATCC 700278 / DSM 12444 / CCUG 56034 / CIP 105152 / NBRC 16084 / F199).